The sequence spans 159 residues: MINYLKSFFLYEIVRGMALTLKYFFKPKVTINYPYEKSPISPRFKGEHALRRYENGEERCIACKLCEAICPAQAIVIEADEREDGSRRTTRYDIDMTKCIYCGLCQEACPVDAIVEGPNFEFASLTHTALIYDKERLLQNGDRWEQALASKLHKDYEYR.

4Fe-4S ferredoxin-type domains lie at 51–80 (RRYE…IEAD) and 90–119 (TRYD…EGPN). [4Fe-4S] cluster-binding residues include cysteine 60, cysteine 63, cysteine 66, cysteine 70, cysteine 99, cysteine 102, cysteine 105, and cysteine 109.

This sequence belongs to the complex I 23 kDa subunit family. NDH-1 is composed of 14 different subunits. Subunits NuoA, H, J, K, L, M, N constitute the membrane sector of the complex. Requires [4Fe-4S] cluster as cofactor.

The protein localises to the cell inner membrane. The enzyme catalyses a quinone + NADH + 5 H(+)(in) = a quinol + NAD(+) + 4 H(+)(out). NDH-1 shuttles electrons from NADH, via FMN and iron-sulfur (Fe-S) centers, to quinones in the respiratory chain. The immediate electron acceptor for the enzyme in this species is believed to be ubiquinone. Couples the redox reaction to proton translocation (for every two electrons transferred, four hydrogen ions are translocated across the cytoplasmic membrane), and thus conserves the redox energy in a proton gradient. In Rickettsia peacockii (strain Rustic), this protein is NADH-quinone oxidoreductase subunit I.